The following is a 435-amino-acid chain: Arginine biosynthesis bifunctional protein ArgJ, mitochondrial (435 aa).

Substrate-binding residues include T179, K205, T216, E302, N430, and S435. T216 acts as the Nucleophile in catalysis.

This sequence belongs to the ArgJ family. Heterodimer of an alpha and a beta chain. The alpha and beta chains are autoproteolytically processed from a single precursor protein within the mitochondrion.

Its subcellular location is the mitochondrion matrix. It carries out the reaction N(2)-acetyl-L-ornithine + L-glutamate = N-acetyl-L-glutamate + L-ornithine. The enzyme catalyses L-glutamate + acetyl-CoA = N-acetyl-L-glutamate + CoA + H(+). It participates in amino-acid biosynthesis; L-arginine biosynthesis; L-ornithine and N-acetyl-L-glutamate from L-glutamate and N(2)-acetyl-L-ornithine (cyclic): step 1/1. It functions in the pathway amino-acid biosynthesis; L-arginine biosynthesis; N(2)-acetyl-L-ornithine from L-glutamate: step 1/4. Its function is as follows. Catalyzes two activities which are involved in the cyclic version of arginine biosynthesis: the synthesis of acetylglutamate from glutamate and acetyl-CoA, and of ornithine by transacetylation between acetylornithine and glutamate. This is Arginine biosynthesis bifunctional protein ArgJ, mitochondrial from Schizosaccharomyces japonicus (strain yFS275 / FY16936) (Fission yeast).